Here is a 410-residue protein sequence, read N- to C-terminus: Shaggy-related protein kinase epsilon (410 aa).

The residue at position 2 (Ala-2) is an N-acetylalanine. The Protein kinase domain occupies 74-358 (YMAERIVGQG…AMEAIVHPFF (285 aa)). ATP is bound by residues 80–88 (VGQGSFGIV) and Lys-103. Residue Asp-199 is the Proton acceptor of the active site. Tyr-234 bears the Phosphotyrosine mark.

It belongs to the protein kinase superfamily. CMGC Ser/Thr protein kinase family. GSK-3 subfamily. In terms of assembly, binds to KIB1. Post-translationally, autophosphorylated mainly on threonine and serine residues.

It carries out the reaction L-seryl-[protein] + ATP = O-phospho-L-seryl-[protein] + ADP + H(+). The enzyme catalyses L-threonyl-[protein] + ATP = O-phospho-L-threonyl-[protein] + ADP + H(+). May mediate extracellular signals to regulate transcription in differentiating cells. In Arabidopsis thaliana (Mouse-ear cress), this protein is Shaggy-related protein kinase epsilon (ASK5).